The chain runs to 134 residues: MSWQTYVDDHLMCDIEGHEGHRLTAAAIVGHDGSVWAQSATFPQFKPEEMNGIMTDFNEPGHLAPTGLHLGGTKYMVIQGEAGAVIRGKKGSGGITIKKTGQALVCGIYEEPVTPGQCNMVVERLGDYLLEQGL.

A disulfide bond links C13 and C118. The Involved in PIP2 interaction signature appears at 84–100 (AVIRGKKGSGGITIKKT). T114 bears the Phosphothreonine mark.

It belongs to the profilin family. Occurs in many kinds of cells as a complex with monomeric actin in a 1:1 ratio. Phosphorylated by MAP kinases.

The protein localises to the cytoplasm. It is found in the cytoskeleton. Its function is as follows. Binds to actin and affects the structure of the cytoskeleton. At high concentrations, profilin prevents the polymerization of actin, whereas it enhances it at low concentrations. This is Profilin-3 from Olea europaea (Common olive).